The following is a 1220-amino-acid chain: Plasma membrane calcium-transporting ATPase 1 (1220 aa).

Residue Gly2 is modified to N-acetylglycine. Residues 2–105 lie on the Cytoplasmic side of the membrane; that stretch reads GDMANNSVAY…KTFLQLVWEA (104 aa). 2 positions are modified to phosphoserine: Ser8 and Ser17. Residues 106–126 form a helical membrane-spanning segment; the sequence is LQDVTLIILEIAAIVSLGLSF. The Extracellular segment spans residues 127 to 154; the sequence is YQPPEGDNALCGEVSVGEEEGEGETGWI. Residues 155–175 traverse the membrane as a helical segment; it reads EGAAILLSVVCVVLVTAFNDW. At 176–366 the chain is on the cytoplasmic side; that stretch reads SKEKQFRGLQ…KEKSVLQGKL (191 aa). Positions 297–356 are disordered; it reads EEEKKDEKKKEKKNKKQDGAIENRNKAKAQDGAAMEMQPLKSEEGGDGDEKDKKKANLPK. 2 stretches are compositionally biased toward basic and acidic residues: residues 312-325 and 337-356; these read KQDGAIENRNKAKA and KSEEGGDGDEKDKKKANLPK. The residue at position 338 (Ser338) is a Phosphoserine. A helical membrane pass occupies residues 367–386; sequence TKLAVQIGKAGLLMSAITVI. Topologically, residues 387–418 are extracellular; that stretch reads ILVLYFVIDTFWVQKRPWLAECTPIYIQYFVK. A helical transmembrane segment spans residues 419 to 439; the sequence is FFIIGVTVLVVAVPEGLPLAV. Residues 440–855 are Cytoplasmic-facing; sequence TISLAYSVKK…RNVYDSISKF (416 aa). The 4-aspartylphosphate intermediate role is filled by Asp475. Residues Asp475, Thr477, and Asp797 each contribute to the Mg(2+) site. A helical membrane pass occupies residues 856 to 876; it reads LQFQLTVNVVAVIVAFTGACI. Residues 877 to 882 lie on the Extracellular side of the membrane; the sequence is TQDSPL. A helical membrane pass occupies residues 883-903; sequence KAVQMLWVNLIMDTLASLALA. The Cytoplasmic portion of the chain corresponds to 904–927; that stretch reads TEPPTESLLLRKPYGRNKPLISRT. The chain crosses the membrane as a helical span at residues 928-948; sequence MMKNILGHAFYQLVVVFTLLF. Over 949–971 the chain is Extracellular; sequence AGEKFFDIDSGRNAPLHAPPSEH. Residues 972–991 traverse the membrane as a helical segment; the sequence is YTIVFNTFVLMQLFNEINAR. At 992–1005 the chain is on the cytoplasmic side; that stretch reads KIHGERNVFEGIFN. Residues 1006–1027 traverse the membrane as a helical segment; the sequence is NAIFCTIVLGTFVVQIIIVQFG. Residues 1028-1039 are Extracellular-facing; the sequence is GKPFSCSELSIE. A helical membrane pass occupies residues 1040–1060; it reads QWLWSIFLGMGTLLWGQLIST. The Cytoplasmic segment spans residues 1061 to 1220; that stretch reads IPTSRLKFLK…SPLHSLETSL (160 aa). The calmodulin-binding subdomain A stretch occupies residues 1100–1117; that stretch reads LRRGQILWFRGLNRIQTQ. A Phosphothreonine; by PKC modification is found at Thr1116. A required for basolateral membrane targeting region spans residues 1118-1220; sequence IRVVNAFRSS…SPLHSLETSL (103 aa). Phosphoserine occurs at positions 1140 and 1155. Positions 1160 to 1220 are disordered; the sequence is PLIDDTDAED…SPLHSLETSL (61 aa). Thr1165 carries the phosphothreonine modification. Ser1178 and Ser1182 each carry phosphoserine. Polar residues predominate over residues 1200 to 1220; it reads MNKSATSSSPGSPLHSLETSL.

Belongs to the cation transport ATPase (P-type) (TC 3.A.3) family. Type IIB subfamily. Monomer. Dimer. Oligomer. Calmodulin binding. Interacts with PDZD11. Interacts with SLC35G1 and STIM1. Interacts with YWHAE; interacts with the monomeric and dimeric forms of the YWHAE but prefer the monomer form; this interaction inhibits calcium-transporting ATPase activity. Interacts with NPTN; this interaction stabilizes ATP2B1 and increases ATPase activity; this interaction controls T cell calcium homeostasis following T cell activation. Interacts with EPB41; regulates small intestinal calcium absorption through regulation of membrane expression of ATP2B1. In terms of tissue distribution, expressed in the retina, with strongest expression in the outer plexiform layer and lower expression levels in the inner nuclear layer and the inner plexiform layer. Specifically expressed in the following retinal cell types: photoreceptor cells, cone bipolar cells and horizontal cells. Expressed in osteoclasts (at protein level). Expressed at highest levels in brain, intestine, kidney, and stomach, and at lower levels in liver, lung, aorta, portal vein, urinary bladder, diaphragm, seminal vesicles and testes. Expressed in small intestinal epithelium.

Its subcellular location is the cell membrane. The protein localises to the basolateral cell membrane. The protein resides in the synapse. It localises to the presynaptic cell membrane. It is found in the cytoplasmic vesicle. Its subcellular location is the secretory vesicle. The protein localises to the synaptic vesicle membrane. The catalysed reaction is Ca(2+)(in) + ATP + H2O = Ca(2+)(out) + ADP + phosphate + H(+). Functionally, catalyzes the hydrolysis of ATP coupled with the transport of calcium from the cytoplasm to the extracellular space thereby maintaining intracellular calcium homeostasis. Plays a role in blood pressure regulation through regulation of intracellular calcium concentration and nitric oxide production leading to regulation of vascular smooth muscle cells vasoconstriction. Positively regulates bone mineralization through absorption of calcium from the intestine. Plays dual roles in osteoclast differentiation and survival by regulating RANKL-induced calcium oscillations in preosteoclasts and mediating calcium extrusion in mature osteoclasts. Regulates insulin sensitivity through calcium/calmodulin signaling pathway by regulating AKT1 activation and NOS3 activation in endothelial cells. May play a role in synaptic transmission by modulating calcium and proton dynamics at the synaptic vesicles. The polypeptide is Plasma membrane calcium-transporting ATPase 1 (Mus musculus (Mouse)).